We begin with the raw amino-acid sequence, 455 residues long: Asparagine--tRNA ligase (455 aa).

This sequence belongs to the class-II aminoacyl-tRNA synthetase family. Homodimer.

It localises to the cytoplasm. It catalyses the reaction tRNA(Asn) + L-asparagine + ATP = L-asparaginyl-tRNA(Asn) + AMP + diphosphate + H(+). The chain is Asparagine--tRNA ligase from Lawsonia intracellularis (strain PHE/MN1-00).